The primary structure comprises 163 residues: Retinoic acid receptor responder protein 2 (163 aa).

The first 20 residues, 1–20 (MRRLLIPLALWLGAVGVGVA), serve as a signal peptide directing secretion. Cystine bridges form between C77-C87, C98-C117, and C101-C135. The propeptide occupies 158–163 (KALPRS).

In terms of processing, secreted in an inactive precursor form, prochemerin, which is proteolytically processed by a variety of extracellular proteases to generate forms with differing levels of bioactivity. For example, the removal of six amino acids results in chemerin-157, which exhibits the highest activity, while removal of seven amino acids results in chemerin-156 which has slightly less activity. Some proteases are able to cleave at more than one site and chemerin forms may be sequentially processed by different enzymes to modulate activity levels. The coordinated expression and activity of chemerin-modifying enzymes is essential for regulating its bioactivation, inactivation and, consequently, biological function. Cathepsin G cleaves seven C-terminal amino acids from prochemerin (chemerin-156), elastase is able to cleave six (chemerin-157), eight (chemerin-155) or eleven (chemerin-152), plasmin cleaves five amino acids (chemerin-158), and tryptase cleaves five (chemerin-158) or eight (chemerin-155). Multiple cleavages might be required to fully activate chemerin, with an initial tryptase cleavage resulting in chemerin with low activity (chemerin-158), and a second cleavage by carboxypeptidase N or B producing highly active chemerin (chemerin-157).

The protein localises to the secreted. Its function is as follows. Adipocyte-secreted protein (adipokine) that regulates adipogenesis, metabolism and inflammation through activation of the chemokine-like receptor 1 (CMKLR1). Also acts as a ligand for CMKLR2. Can also bind to C-C chemokine receptor-like 2 (CCRL2), but with a lower affinity than it does to CMKLR1 or CMKLR2. Positively regulates adipocyte differentiation, modulates the expression of adipocyte genes involved in lipid and glucose metabolism and might play a role in angiogenesis, a process essential for the expansion of white adipose tissue. Also acts as a pro-inflammatory adipokine, causing an increase in secretion of pro-inflammatory and prodiabetic adipokines, which further impair adipose tissue metabolic function and have negative systemic effects including impaired insulin sensitivity, altered glucose and lipid metabolism, and a decrease in vascular function in other tissues. Can have both pro- and anti-inflammatory properties depending on the modality of enzymatic cleavage by different classes of proteases. Acts as a chemotactic factor for leukocyte populations expressing CMKLR1, particularly immature plasmacytoid dendritic cells, but also immature myeloid DCs, macrophages and natural killer cells. Exerts an anti-inflammatory role by preventing TNF/TNFA-induced VCAM1 expression and monocytes adhesion in vascular endothelial cells. The effect is mediated via inhibiting activation of NF-kappa-B and CRK/p38 through stimulation of AKT1/NOS3 signaling and nitric oxide production. Exhibits an antimicrobial function in the skin. This chain is Retinoic acid receptor responder protein 2 (RARRES2), found in Pongo abelii (Sumatran orangutan).